Consider the following 349-residue polypeptide: Protein-glutamate methylesterase/protein-glutamine glutaminase 2 (349 aa).

Residues 4–121 form the Response regulatory domain; the sequence is SVLVVDDSAL…AEGMQAYAEE (118 aa). Asp55 is subject to 4-aspartylphosphate. A CheB-type methylesterase domain is found at 151 to 343; the sequence is LLSTEKIIAL…AALLQQAARR (193 aa). Catalysis depends on residues Ser163, His189, and Asp285.

Belongs to the CheB family. In terms of assembly, interacts with the C-terminal pentapeptide GWEEF of McpB. Post-translationally, phosphorylated by CheA. Phosphorylation of the N-terminal regulatory domain activates the methylesterase activity.

Its subcellular location is the cytoplasm. The enzyme catalyses [protein]-L-glutamate 5-O-methyl ester + H2O = L-glutamyl-[protein] + methanol + H(+). The catalysed reaction is L-glutaminyl-[protein] + H2O = L-glutamyl-[protein] + NH4(+). Functionally, involved in chemotaxis. Part of a chemotaxis signal transduction system that modulates chemotaxis in response to various stimuli. Catalyzes the demethylation of specific methylglutamate residues introduced into the chemoreceptors (methyl-accepting chemotaxis proteins or MCP) by CheR. Also mediates the irreversible deamidation of specific glutamine residues to glutamic acid. Acts on the methyl-accepting chemotaxis protein McpB. May be involved in a specific chemotactic response, which takes place during infection and is required for P.aeruginosa pathogenicity. In Pseudomonas aeruginosa (strain ATCC 15692 / DSM 22644 / CIP 104116 / JCM 14847 / LMG 12228 / 1C / PRS 101 / PAO1), this protein is Protein-glutamate methylesterase/protein-glutamine glutaminase 2.